The chain runs to 253 residues: Bridging integrator 3 (253 aa).

One can recognise a BAR domain in the interval 9–232 (GQPKKQIVPK…LDQPGHSDEQ (224 aa)). Coiled coils occupy residues 18–51 (KTVE…STDA), 120–152 (SLNM…EKTG), and 231–247 (EQRE…LRAL). The tract at residues 220–240 (SHQLDQPGHSDEQRERENEAK) is disordered. The segment covering 227–240 (GHSDEQRERENEAK) has biased composition (basic and acidic residues).

In terms of tissue distribution, ubiquitously expressed except in brain.

The protein resides in the cytoplasm. Its subcellular location is the cytoskeleton. Involved in cytokinesis and septation where it has a role in the localization of F-actin. This chain is Bridging integrator 3 (BIN3), found in Homo sapiens (Human).